The sequence spans 324 residues: Taste receptor type 2 member 116 (324 aa).

Topologically, residues 1–2 (MN) are extracellular. A helical transmembrane segment spans residues 3–23 (GVLYITFTVILSVEVIIGNFG). Residues 24–55 (NGIIALVNIMDLAKRRKISSVDQILTALAISR) lie on the Cytoplasmic side of the membrane. A helical transmembrane segment spans residues 56–76 (IVLLWLVLVSWWLSMFYPGQW). Residues 77-94 (MTEGIDVIVHNVWTTLNQ) are Extracellular-facing. The chain crosses the membrane as a helical span at residues 95–115 (ISLWLATSFSVFCFLKVANFS). Residues 116–128 (NTIFFYLKIRVKK) lie on the Cytoplasmic side of the membrane. A helical transmembrane segment spans residues 129-149 (VMTGTLIMFLLLLGLNIIVIN). At 150-183 (ASKTILIPEYKVNMSNSLNLKNTQISMLFPFANT) the chain is on the extracellular side. N162 carries an N-linked (GlcNAc...) asparagine glycan. The chain crosses the membrane as a helical span at residues 184 to 204 (LFGFIPFAVSLVTFLLLFFSL). Residues 205-236 (WKHQRKMHHGAQGCRDSSTKAHIRVLQTLIAS) are Cytoplasmic-facing. The helical transmembrane segment at 237-257 (ILLYFVFFLSLVVKVWISLFL) threads the bilayer. The Extracellular segment spans residues 258-261 (ERML). A helical membrane pass occupies residues 262–282 (LLLITQAAKIAFPSLHPWVLI). The Cytoplasmic segment spans residues 283-324 (LGNAKLRKASLSALQWLRCRHKDEHRRVQRPEVHSCGSSCMP).

This sequence belongs to the G-protein coupled receptor T2R family.

It localises to the membrane. Functionally, putative taste receptor which may play a role in the perception of bitterness. This is Taste receptor type 2 member 116 from Rattus norvegicus (Rat).